The following is a 273-amino-acid chain: Thiazole synthase (273 aa).

Residue Lys-113 is the Schiff-base intermediate with DXP of the active site. Residues Gly-174, 201 to 202 (AG), and 223 to 224 (NT) contribute to the 1-deoxy-D-xylulose 5-phosphate site.

It belongs to the ThiG family. As to quaternary structure, homotetramer. Forms heterodimers with either ThiH or ThiS.

It localises to the cytoplasm. It carries out the reaction [ThiS sulfur-carrier protein]-C-terminal-Gly-aminoethanethioate + 2-iminoacetate + 1-deoxy-D-xylulose 5-phosphate = [ThiS sulfur-carrier protein]-C-terminal Gly-Gly + 2-[(2R,5Z)-2-carboxy-4-methylthiazol-5(2H)-ylidene]ethyl phosphate + 2 H2O + H(+). Its pathway is cofactor biosynthesis; thiamine diphosphate biosynthesis. Functionally, catalyzes the rearrangement of 1-deoxy-D-xylulose 5-phosphate (DXP) to produce the thiazole phosphate moiety of thiamine. Sulfur is provided by the thiocarboxylate moiety of the carrier protein ThiS. In vitro, sulfur can be provided by H(2)S. This is Thiazole synthase from Salinibacter ruber (strain DSM 13855 / M31).